The sequence spans 506 residues: MKEYQVYLERDRSRQQDFLYPLIFREYVYGLAYSHDFNRSTFVENVGYDNKYSLLIVKRLITRMYQQNHLIISANDSKKNPFLGYNKNFYSQIISEGFAIIVEIPFFLQFSSSLEAAEIVKSYKNLRSIHSIFPFLEDKFPYLNYVSDIRIPYPIHLEILVQILRYWVKDAPFFHLLRLFLYNFCNRNSFLTPKKSISTFSKSNPRLFLFLYNFYVCEYESIFLFLRKKSSHLRLKSFSVFFERIFFYAKREHLVEVFAKDFSSTLTFFKDPLIHYVRYQGKSILASKNAPLLMNKWKHYFIHLWECFFDVWSQPGTIHIKQLSEHSFYLLGYFSNVRLNRSVVRSQMVQNTFLIEIVSKKLDIIVPIIPIIRSLAKAKFCNVLGHPISKAVWADSSDFDIIDRFLRICRNISHYYNGSSKKKSLYRIKYILRLSCIKTLACKHKSTVRAFLKRSGSEELLEEFFTEEEEILSLIFPRASSTLQKLHGNRIWYLDILFSNDLVNHE.

This sequence belongs to the intron maturase 2 family. MatK subfamily.

Its subcellular location is the plastid. The protein resides in the chloroplast. Functionally, usually encoded in the trnK tRNA gene intron. Probably assists in splicing its own and other chloroplast group II introns. The chain is Maturase K from Mimosa pudica (Sensitive plant).